Here is a 248-residue protein sequence, read N- to C-terminus: Sugar fermentation stimulation protein homolog (248 aa).

This sequence belongs to the SfsA family.

The sequence is that of Sugar fermentation stimulation protein homolog from Prochlorococcus marinus subsp. pastoris (strain CCMP1986 / NIES-2087 / MED4).